We begin with the raw amino-acid sequence, 436 residues long: CaM kinase-like vesicle-associated protein (436 aa).

The Protein kinase domain occupies 24-286 (YDLGQIVKSE…AQEAINHEWI (263 aa)). The tract at residues 328-436 (APENQTAAAT…ALDTVEEQSG (109 aa)) is disordered. A compositionally biased stretch (low complexity) spans 333–409 (TAAATAPAAE…QPPAEPVVHV (77 aa)).

The protein belongs to the protein kinase superfamily. CAMK Ser/Thr protein kinase family. In terms of assembly, interacts with calmodulin, in the presence of calcium. Requires Ca(2+) as cofactor.

It is found in the cytoplasmic vesicle membrane. Its function is as follows. Does not appear to have detectable kinase activity. This Danio rerio (Zebrafish) protein is CaM kinase-like vesicle-associated protein (camkv).